Consider the following 224-residue polypeptide: NBPF family member NBPF6-like protein (224 aa).

In terms of domain architecture, Olduvai spans Glu-159–Leu-224. Basic and acidic residues predominate over residues Tyr-198–Arg-209. The disordered stretch occupies residues Tyr-198–Leu-224.

It belongs to the NBPF family.

The chain is NBPF family member NBPF6-like protein from Bos taurus (Bovine).